Here is a 274-residue protein sequence, read N- to C-terminus: Diaminopimelate epimerase (274 aa).

Substrate-binding residues include N11, Q44, and N64. The active-site Proton donor is the C73. Substrate contacts are provided by residues 74-75 (GN), N157, N190, and 208-209 (ER). The active-site Proton acceptor is the C217. A substrate-binding site is contributed by 218 to 219 (GS).

Belongs to the diaminopimelate epimerase family. In terms of assembly, homodimer.

Its subcellular location is the cytoplasm. It carries out the reaction (2S,6S)-2,6-diaminopimelate = meso-2,6-diaminopimelate. It functions in the pathway amino-acid biosynthesis; L-lysine biosynthesis via DAP pathway; DL-2,6-diaminopimelate from LL-2,6-diaminopimelate: step 1/1. Catalyzes the stereoinversion of LL-2,6-diaminopimelate (L,L-DAP) to meso-diaminopimelate (meso-DAP), a precursor of L-lysine and an essential component of the bacterial peptidoglycan. In Glaesserella parasuis serovar 5 (strain SH0165) (Haemophilus parasuis), this protein is Diaminopimelate epimerase.